A 196-amino-acid polypeptide reads, in one-letter code: ATP-dependent Clp protease proteolytic subunit (196 aa).

Ser96 functions as the Nucleophile in the catalytic mechanism. His121 is an active-site residue.

This sequence belongs to the peptidase S14 family. As to quaternary structure, fourteen ClpP subunits assemble into 2 heptameric rings which stack back to back to give a disk-like structure with a central cavity, resembling the structure of eukaryotic proteasomes.

The protein localises to the cytoplasm. The catalysed reaction is Hydrolysis of proteins to small peptides in the presence of ATP and magnesium. alpha-casein is the usual test substrate. In the absence of ATP, only oligopeptides shorter than five residues are hydrolyzed (such as succinyl-Leu-Tyr-|-NHMec, and Leu-Tyr-Leu-|-Tyr-Trp, in which cleavage of the -Tyr-|-Leu- and -Tyr-|-Trp bonds also occurs).. Its function is as follows. Cleaves peptides in various proteins in a process that requires ATP hydrolysis. Has a chymotrypsin-like activity. Plays a major role in the degradation of misfolded proteins. In Streptococcus pyogenes serotype M3 (strain SSI-1), this protein is ATP-dependent Clp protease proteolytic subunit.